The sequence spans 167 residues: Protein archease (167 aa).

An N-acetylalanine modification is found at Ala2. Positions 39, 166, and 167 each coordinate Ca(2+).

The protein belongs to the archease family. In terms of assembly, component of the tRNA-splicing ligase complex.

Functionally, component of the tRNA-splicing ligase complex required to facilitate the enzymatic turnover of catalytic subunit RTCB. Together with DDX1, acts by facilitating the guanylylation of RTCB, a key intermediate step in tRNA ligation. The sequence is that of Protein archease (ZBTB8OS) from Homo sapiens (Human).